We begin with the raw amino-acid sequence, 99 residues long: Ferredoxin, heterocyst (99 aa).

The 2Fe-2S ferredoxin-type domain occupies 4–96 (YQVRLINKKQ…NCTIKTHQEP (93 aa)). [2Fe-2S] cluster is bound by residues cysteine 42, cysteine 47, cysteine 50, and cysteine 80.

The protein belongs to the 2Fe2S plant-type ferredoxin family. Requires [2Fe-2S] cluster as cofactor.

Ferredoxins are iron-sulfur proteins that transfer electrons in a wide variety of metabolic reactions. Donates electrons to the nitrogenase. In Nostoc sp. (strain PCC 7120 / SAG 25.82 / UTEX 2576), this protein is Ferredoxin, heterocyst (fdxH).